The primary structure comprises 165 residues: Phosphopantetheine adenylyltransferase (165 aa).

Residue serine 9 coordinates substrate. Residues 9 to 10 (SF) and histidine 17 contribute to the ATP site. The substrate site is built by lysine 41, leucine 73, and lysine 87. Residues 88 to 90 (GLR), glutamate 98, and 122 to 128 (YSFLSSS) contribute to the ATP site.

Belongs to the bacterial CoaD family. Homohexamer. Mg(2+) is required as a cofactor.

Its subcellular location is the cytoplasm. The enzyme catalyses (R)-4'-phosphopantetheine + ATP + H(+) = 3'-dephospho-CoA + diphosphate. Its pathway is cofactor biosynthesis; coenzyme A biosynthesis; CoA from (R)-pantothenate: step 4/5. Reversibly transfers an adenylyl group from ATP to 4'-phosphopantetheine, yielding dephospho-CoA (dPCoA) and pyrophosphate. The sequence is that of Phosphopantetheine adenylyltransferase from Acidothermus cellulolyticus (strain ATCC 43068 / DSM 8971 / 11B).